Reading from the N-terminus, the 70-residue chain is MPGVKAREQESFEEAYRKFKKQADRNLIVTECRARRFFEPMTEKRKKQKINARKKMLKRLYMLRRYESRL.

Belongs to the bacterial ribosomal protein bS21 family.

This is Small ribosomal subunit protein bS21 from Wolinella succinogenes (strain ATCC 29543 / DSM 1740 / CCUG 13145 / JCM 31913 / LMG 7466 / NCTC 11488 / FDC 602W) (Vibrio succinogenes).